Here is a 180-residue protein sequence, read N- to C-terminus: Adenine phosphoribosyltransferase (180 aa).

The protein belongs to the purine/pyrimidine phosphoribosyltransferase family. As to quaternary structure, homodimer.

The protein resides in the cytoplasm. The enzyme catalyses AMP + diphosphate = 5-phospho-alpha-D-ribose 1-diphosphate + adenine. Its pathway is purine metabolism; AMP biosynthesis via salvage pathway; AMP from adenine: step 1/1. In terms of biological role, catalyzes a salvage reaction resulting in the formation of AMP, that is energically less costly than de novo synthesis. The chain is Adenine phosphoribosyltransferase from Mycolicibacterium smegmatis (strain ATCC 700084 / mc(2)155) (Mycobacterium smegmatis).